We begin with the raw amino-acid sequence, 324 residues long: Acetyl-coenzyme A carboxylase carboxyl transferase subunit alpha (324 aa).

In terms of domain architecture, CoA carboxyltransferase C-terminal spans 37–291 (ILEEKLENLE…DLMIRKTFEQ (255 aa)).

This sequence belongs to the AccA family. In terms of assembly, acetyl-CoA carboxylase is a heterohexamer composed of biotin carboxyl carrier protein (AccB), biotin carboxylase (AccC) and two subunits each of ACCase subunit alpha (AccA) and ACCase subunit beta (AccD).

Its subcellular location is the cytoplasm. It carries out the reaction N(6)-carboxybiotinyl-L-lysyl-[protein] + acetyl-CoA = N(6)-biotinyl-L-lysyl-[protein] + malonyl-CoA. It functions in the pathway lipid metabolism; malonyl-CoA biosynthesis; malonyl-CoA from acetyl-CoA: step 1/1. In terms of biological role, component of the acetyl coenzyme A carboxylase (ACC) complex. First, biotin carboxylase catalyzes the carboxylation of biotin on its carrier protein (BCCP) and then the CO(2) group is transferred by the carboxyltransferase to acetyl-CoA to form malonyl-CoA. The polypeptide is Acetyl-coenzyme A carboxylase carboxyl transferase subunit alpha (Bacillus cereus (strain B4264)).